The primary structure comprises 779 residues: Probable phosphoketolase 2 (779 aa).

Belongs to the XFP family. The cofactor is thiamine diphosphate.

The chain is Probable phosphoketolase 2 from Rhizobium meliloti (strain 1021) (Ensifer meliloti).